The primary structure comprises 244 residues: Geranylgeranylglyceryl phosphate synthase (244 aa).

2 residues coordinate Mg(2+): Asp21 and Thr50. Sn-glycerol 1-phosphate is bound by residues 168-174, 200-201, and 222-223; these read YLEAGSG, GG, and GN.

This sequence belongs to the GGGP/HepGP synthase family. Group II subfamily. The cofactor is Mg(2+).

Its subcellular location is the cytoplasm. It catalyses the reaction sn-glycerol 1-phosphate + (2E,6E,10E)-geranylgeranyl diphosphate = sn-3-O-(geranylgeranyl)glycerol 1-phosphate + diphosphate. It participates in membrane lipid metabolism; glycerophospholipid metabolism. Functionally, prenyltransferase that catalyzes the transfer of the geranylgeranyl moiety of geranylgeranyl diphosphate (GGPP) to the C3 hydroxyl of sn-glycerol-1-phosphate (G1P). This reaction is the first ether-bond-formation step in the biosynthesis of archaeal membrane lipids. The sequence is that of Geranylgeranylglyceryl phosphate synthase from Sulfurisphaera tokodaii (strain DSM 16993 / JCM 10545 / NBRC 100140 / 7) (Sulfolobus tokodaii).